Reading from the N-terminus, the 280-residue chain is MMETNSRVVVGEGAGQVVFSQKERLTLIAGPCQMESREHAFMIAGELVELCRSLGLGLVYKSSFDKANRTSLSGKRGIGLDKAMEVFADLKREFGFPVLTDIHTEEQCAAVAETVDILQIPAFLSRQTDLLVAAAKTGRTINVKKGQFLAPWDMKNVLAKFTESGNPNVLLCERGASFGYNTLVSDMRSLPIMAALGAPVVFDATHSVQQPGGQGGSTGGQREFVETLARAAVAVGVAGVFVETHEDPDNAPSDGPNMVPLKDMPRLLEKLLAFDAVAKA.

It belongs to the KdsA family.

It is found in the cytoplasm. It catalyses the reaction D-arabinose 5-phosphate + phosphoenolpyruvate + H2O = 3-deoxy-alpha-D-manno-2-octulosonate-8-phosphate + phosphate. The protein operates within carbohydrate biosynthesis; 3-deoxy-D-manno-octulosonate biosynthesis; 3-deoxy-D-manno-octulosonate from D-ribulose 5-phosphate: step 2/3. Its pathway is bacterial outer membrane biogenesis; lipopolysaccharide biosynthesis. In Rhizobium meliloti (strain 1021) (Ensifer meliloti), this protein is 2-dehydro-3-deoxyphosphooctonate aldolase.